We begin with the raw amino-acid sequence, 605 residues long: Ras guanine nucleotide exchange factor A (605 aa).

The LisH domain occupies 67–99; sequence DKTAIIQLILQHLSTKGLKQTKQTLEKEARTTT. Residues 198 to 320 form the N-terminal Ras-GEF domain; that stretch reads DDEVVKFASL…SLTKMVEKLS (123 aa). The 245-residue stretch at 353 to 597 folds into the Ras-GEF domain; it reads DEEEIARQLT…YRESLKREPK (245 aa).

Component of the Sca1 complex composed of at least gefA, gefH, scaA, phr, and the protein phosphatase 2A subunits pppA and pho2B. Interacts directly with gefH.

It is found in the cell membrane. Its function is as follows. Ras-bound GDP/GTP exchange factor required for normal activation of adenylyl cyclase. Component of the Sca1 complex, a regulator of cell motility, chemotaxis and signal relay. The Sca1 complex is recruited to the plasma membrane in a chemoattractant- and F-actin-dependent manner and is enriched at the leading edge of chemotaxing cells where it regulates F-actin dynamics and signal relay by controlling the activation of rasC and the downstream target of rapamycin complex 2 (TORC2)-Akt/protein kinase B (PKB) pathway. The protein is Ras guanine nucleotide exchange factor A (gefA) of Dictyostelium discoideum (Social amoeba).